We begin with the raw amino-acid sequence, 556 residues long: MPTVDDVLEQVGEFGWFQKQAFLLLCLISASLAPIYVGIVFLGFTPGHYCQNPGVAELSQRCGWSQAEELNYTVPGLGPSDEASFLSQCMRYEVDWNQSTLDCVDPLSSLVANRSQLPLGPCEHGWVYDTPGSSIVTEFNLVCGDAWKVDLFQSCVNLGFFLGSLVVGYIADRFGRKLCLLVTTLVTSVSGVLTAVAPDYTSMLLFRLLQGMVSKGSWVSGYTLITEFVGSGYRRTTAILYQMAFTVGLVGLAGVAYAIPDWRWLQLAVSLPTFLFLLYYWFVPESPRWLLSQKRTTRAVRIMEQIAQKNGKVPPADLKMLCLEEDASEKRSPSFADLFRTPNLRKHTVILMYLWFSCAVLYQGLIMHVGATGANLYLDFFYSSLVEFPAAFIILVTIDRIGRIYPIAASNLVTGAACLLMIFIPHELHWLNVTLACLGRMGATIVLQMVCLVNAELYPTFIRNLGMMVCSALCDLGGIFTPFMVFRLMEVWQALPLILFGVLGLTAGAMTLLLPETKGVALPETIEEAENLGRRKSKAKENTIYLQVQTGKSSST.

Over 1-21 the chain is Cytoplasmic; sequence MPTVDDVLEQVGEFGWFQKQA. A helical membrane pass occupies residues 22–42; that stretch reads FLLLCLISASLAPIYVGIVFL. Over 43–150 the chain is Extracellular; sequence GFTPGHYCQN…LVCGDAWKVD (108 aa). The N-linked (GlcNAc...) asparagine glycan is linked to Asn-71. A helical membrane pass occupies residues 151–171; the sequence is LFQSCVNLGFFLGSLVVGYIA. Over 172–177 the chain is Cytoplasmic; it reads DRFGRK. The chain crosses the membrane as a helical span at residues 178 to 198; sequence LCLLVTTLVTSVSGVLTAVAP. The Extracellular portion of the chain corresponds to 199-211; it reads DYTSMLLFRLLQG. The helical transmembrane segment at 212–231 threads the bilayer; the sequence is MVSKGSWVSGYTLITEFVGS. At 232-238 the chain is on the cytoplasmic side; it reads GYRRTTA. A helical membrane pass occupies residues 239–259; that stretch reads ILYQMAFTVGLVGLAGVAYAI. The Extracellular segment spans residues 260–263; the sequence is PDWR. Residues 264-284 traverse the membrane as a helical segment; that stretch reads WLQLAVSLPTFLFLLYYWFVP. A Proline-rich sequence motif is present at residues 284–288; sequence PESPR. Topologically, residues 285–348 are cytoplasmic; sequence ESPRWLLSQK…FRTPNLRKHT (64 aa). A Phosphoserine modification is found at Ser-334. Residues 349–369 traverse the membrane as a helical segment; it reads VILMYLWFSCAVLYQGLIMHV. The Extracellular segment spans residues 370 to 377; the sequence is GATGANLY. Residues 378 to 398 form a helical membrane-spanning segment; the sequence is LDFFYSSLVEFPAAFIILVTI. The Cytoplasmic portion of the chain corresponds to 399–403; it reads DRIGR. The chain crosses the membrane as a helical span at residues 404-424; sequence IYPIAASNLVTGAACLLMIFI. At 425–429 the chain is on the extracellular side; the sequence is PHELH. A helical membrane pass occupies residues 430 to 452; it reads WLNVTLACLGRMGATIVLQMVCL. Topologically, residues 453-465 are cytoplasmic; sequence VNAELYPTFIRNL. Residues 466 to 486 form a helical membrane-spanning segment; it reads GMMVCSALCDLGGIFTPFMVF. Residues 487–493 lie on the Extracellular side of the membrane; it reads RLMEVWQ. The helical transmembrane segment at 494-514 threads the bilayer; it reads ALPLILFGVLGLTAGAMTLLL. At 515–556 the chain is on the cytoplasmic side; sequence PETKGVALPETIEEAENLGRRKSKAKENTIYLQVQTGKSSST. Thr-543 bears the Phosphothreonine mark.

Belongs to the major facilitator (TC 2.A.1) superfamily. Organic cation transporter (TC 2.A.1.19) family. Post-translationally, phosphorylated. In terms of tissue distribution, expressed in kidney cortex in S1, S2 segments of renal proximal tubules as well as in kidney medulla. Expressed throughout the liver lobuli, in hepatocytes surrounding the central veins. Expressed in enterocytes of villi and crypts in small intestine. Expressed in brain, in some white matter regions like the corpus callosum and in the granular layer of the cerebellum. Expressed in Sertoli cells in testis. Expressed in colon. Expressed in tracheal and bronchial ciliated epithelium in the respiratory tract. Expressed in spleen, moderately in skin, and weakly in the gastrointestinal tract, lung, thymus, muscle, and prostate. Expressed in kidney cortex and medulla. Expressed in intestine, liver and colon.

It is found in the basolateral cell membrane. The protein resides in the apical cell membrane. It localises to the lateral cell membrane. The protein localises to the basal cell membrane. Its subcellular location is the cell membrane. It catalyses the reaction 1-methylnicotinamide(out) = 1-methylnicotinamide(in). It carries out the reaction dopamine(out) = dopamine(in). The enzyme catalyses serotonin(out) = serotonin(in). The catalysed reaction is (R)-adrenaline(out) = (R)-adrenaline(in). It catalyses the reaction (R)-noradrenaline(out) = (R)-noradrenaline(in). It carries out the reaction histamine(out) = histamine(in). The enzyme catalyses guanidine(out) = guanidine(in). The catalysed reaction is choline(out) = choline(in). It catalyses the reaction acetylcholine(in) = acetylcholine(out). It carries out the reaction thiamine(in) = thiamine(out). The enzyme catalyses agmatine(out) = agmatine(in). The catalysed reaction is putrescine(out) = putrescine(in). It catalyses the reaction spermidine(in) = spermidine(out). It carries out the reaction (R)-carnitine(in) = (R)-carnitine(out). The enzyme catalyses O-isobutanoyl-(R)-carnitine(in) = O-isobutanoyl-(R)-carnitine(out). The catalysed reaction is O-acetyl-(R)-carnitine(in) = O-acetyl-(R)-carnitine(out). It catalyses the reaction O-3-hydroxybutanoyl-(R)-carnitine(in) = O-3-hydroxybutanoyl-(R)-carnitine(out). It carries out the reaction O-propanoyl-(R)-carnitine(in) = O-propanoyl-(R)-carnitine(out). The enzyme catalyses O-butanoyl-(R)-carnitine(in) = O-butanoyl-(R)-carnitine(out). The catalysed reaction is O-2-methylbutanoyl-(R)-carnitine(in) = O-2-methylbutanoyl-(R)-carnitine(out). It catalyses the reaction O-3-methylbutanoyl-(R)-carnitine(in) = O-3-methylbutanoyl-(R)-carnitine(out). It carries out the reaction O-hexanoyl-(R)-carnitine(in) = O-hexanoyl-(R)-carnitine(out). The enzyme catalyses L-histidyl-L-proline diketopiperazine(in) = L-histidyl-L-proline diketopiperazine(out). The catalysed reaction is (R)-salsolinol(in) = (R)-salsolinol(out). It catalyses the reaction prostaglandin F2alpha(out) = prostaglandin F2alpha(in). It carries out the reaction prostaglandin E2(out) = prostaglandin E2(in). With respect to regulation, phosphorylation of the transporter leads to changes in its substrate affinity, resulting in a regulation of the transport activity. In contrast with human ortholog, ASP uptake is stimulated by protein kinase A (PKA) and C (PKC) and endogenous tyrosine kinase activation. ASP affinity is induced by PKC-dependent phosphorylation. Inhibited by cGMP, most likely through a cGMP-binding protein that interacts with OCT1. Functionally, electrogenic voltage-dependent transporter that mediates the transport of a variety of organic cations such as endogenous bioactive amines, cationic drugs and xenobiotics. Functions as a pH- and Na(+)-independent, bidirectional transporter. Cation cellular uptake or release is driven by the electrochemical potential (i.e. membrane potential and concentration gradient) and substrate selectivity. Hydrophobicity is a major requirement for recognition in polyvalent substrates and inhibitors. Primarily expressed in the basolateral membrane of hepatocytes and proximal tubules and involved in the uptake and disposition of cationic compounds from the blood by hepatic and renal clearance. Most likely functions as an uptake carrier in enterocytes contributing to the intestinal excretion and elimination of organic cations from the systemic circulation. Transports endogenous monoamines such as N-1-methylnicotinamide (NMN), guanidine, neurotransmitters dopamine, serotonin, noradrenaline, adrenaline and histamine, and quaternary ammonium compound such as choline. Also transports natural polyamines such as spermidine, agmatine and putrescine at low affinity, but relatively high turnover. Involved in the hepatic uptake of vitamin B1/thiamine, hence regulating hepatic lipid and energy metabolism. Contributes to the influx and efflux of fatty acid carriers carnitines and acylcarnitines across the basolateral membrane of hepatocytes, from the liver to the systemic circulation and inversely and may be involved in regulating the systemic availability of hepatic acylcarnitines. Mediates the bidirectional transport of acetylcholine (ACh) at the apical membrane of ciliated cell in airway epithelium, thereby playing a role in luminal release of ACh from bronchial epithelium. Transports dopaminergic neuromodulators cyclo(his-pro) and salsolinol with lower efficency. Also capable of transporting non-amine endogenous compounds such as prostaglandin E2 (PGE2) and prostaglandin F2-alpha (PGF2-alpha). May contribute to the transport of cationic compounds in testis across the blood-testis-barrier. Also mediates the uptake of xenobiotics tributylmethylammonium (TBuMA), quinidine, N-methyl-quinine (NMQ), N-methyl-quinidine (NMQD) N-(4,4-azo-n-pentyl)-quinuclidine (APQ), azidoprocainamide methoiodide (AMP), N-(4,4-azo-n-pentyl)-21-deoxyajmalinium (APDA) and 4-(4-(dimethylamino)styryl)-N-methylpyridinium (ASP). Its function is as follows. Functional isoform capable of transporting TEA. This is Solute carrier family 22 member 1 from Rattus norvegicus (Rat).